The primary structure comprises 95 residues: Large ribosomal subunit protein uL23c (95 aa).

It belongs to the universal ribosomal protein uL23 family. In terms of assembly, part of the 50S ribosomal subunit.

It is found in the plastid. Its subcellular location is the chloroplast. Binds to 23S rRNA. The chain is Large ribosomal subunit protein uL23c (rpl23) from Chlamydomonas reinhardtii (Chlamydomonas smithii).